The following is a 227-amino-acid chain: Endo-1,4-beta-xylanase 11A (227 aa).

An N-terminal signal peptide occupies residues 1–36 (MVSASSLLLAASAIAGVFSAPAAAPVSENLNVLQER). Positions 37-227 (ALTSSATGTS…SSGSASITVS (191 aa)) constitute a GH11 domain. Residues 112–136 (VYGWTTSPLIEYYIVEDFGTYDPSS) form a necrosis inducing domain region. Glu122 acts as the Nucleophile in catalysis. The active-site Proton donor is Glu214.

Belongs to the glycosyl hydrolase 11 (cellulase G) family.

Its subcellular location is the secreted. It catalyses the reaction Endohydrolysis of (1-&gt;4)-beta-D-xylosidic linkages in xylans.. It participates in glycan degradation; xylan degradation. Significantly inhibited by the wheat xylanase inhibiting protein I (XIP-I) and the proteinaceous endoxylanase Triticum aestivum xylanase inhibitors I (TAXI-I), whereas no inhibition is detected with TAXI-II. Its function is as follows. Endo-1,4-beta-xylanase involved in the hydrolysis of xylan, a major structural heterogeneous polysaccharide found in plant biomass representing the second most abundant polysaccharide in the biosphere, after cellulose. Required for plant infection and the appearance of secondary lesions. Is able to induce necrosis on leaves, seedling growth inhibition, induction of a ROS burst, electrolyte leakage, cytoplasm shrinkage, autofluorescence, cell death, and induction of defense genes, and this abilities are independent of the catalytic activity. Only exhibits elicitor activity in certain plants such as tomato, but not in N.benthamiana. The sequence is that of Endo-1,4-beta-xylanase 11A from Botryotinia fuckeliana (strain B05.10) (Noble rot fungus).